We begin with the raw amino-acid sequence, 219 residues long: Small ribosomal subunit protein uS3 (219 aa).

A KH type-2 domain is found at 38–106 (VRKFVKTKLQ…QVAVNIVEVK (69 aa)).

It belongs to the universal ribosomal protein uS3 family. In terms of assembly, part of the 30S ribosomal subunit. Forms a tight complex with proteins S10 and S14.

Its function is as follows. Binds the lower part of the 30S subunit head. Binds mRNA in the 70S ribosome, positioning it for translation. This Desulfitobacterium hafniense (strain DSM 10664 / DCB-2) protein is Small ribosomal subunit protein uS3.